The following is a 176-amino-acid chain: Flavodoxin-like domain-containing protein BilS (176 aa).

The protein operates within porphyrin-containing compound metabolism; protoheme degradation. Functionally, together with BilR, catalyzes reduction of mesobilirubin and/or bilirubin to urobilinogen, a key step during heme degradation. BilS is probably involved in electron transfer for the bilirubin reductase BilR. The chain is Flavodoxin-like domain-containing protein BilS from Clostridioides difficile (strain CD3).